The following is a 666-amino-acid chain: Protein translocase subunit SecA 2 (666 aa).

ATP is bound by residues Gln119, 137–141 (GEGKS), and Asp546.

Belongs to the SecA family. In terms of assembly, monomer and homodimer. Part of the essential Sec protein translocation apparatus which comprises SecA, SecYEG and auxiliary proteins SecDF-YajC and YidC.

It is found in the cell inner membrane. It localises to the cytoplasm. It carries out the reaction ATP + H2O + cellular proteinSide 1 = ADP + phosphate + cellular proteinSide 2.. Its function is as follows. Part of the Sec protein translocase complex. Interacts with the SecYEG preprotein conducting channel. Has a central role in coupling the hydrolysis of ATP to the transfer of proteins into and across the cell membrane, serving both as a receptor for the preprotein-SecB complex and as an ATP-driven molecular motor driving the stepwise translocation of polypeptide chains across the membrane. This chain is Protein translocase subunit SecA 2, found in Nitrosospira multiformis (strain ATCC 25196 / NCIMB 11849 / C 71).